A 62-amino-acid polypeptide reads, in one-letter code: Large ribosomal subunit protein bL32 (62 aa).

It belongs to the bacterial ribosomal protein bL32 family.

The sequence is that of Large ribosomal subunit protein bL32 (rpmF) from Treponema pallidum (strain Nichols).